The following is a 458-amino-acid chain: tRNA modification GTPase MnmE (458 aa).

3 residues coordinate (6S)-5-formyl-5,6,7,8-tetrahydrofolate: R26, E88, and R127. The TrmE-type G domain occupies G224–F378. N234 is a binding site for K(+). Residues N234–S239, T253–T259, and D278–G281 contribute to the GTP site. Residue S238 participates in Mg(2+) binding. Residues T253, I255, and T258 each contribute to the K(+) site. T259 provides a ligand contact to Mg(2+). K458 contacts (6S)-5-formyl-5,6,7,8-tetrahydrofolate.

This sequence belongs to the TRAFAC class TrmE-Era-EngA-EngB-Septin-like GTPase superfamily. TrmE GTPase family. As to quaternary structure, homodimer. Heterotetramer of two MnmE and two MnmG subunits. It depends on K(+) as a cofactor.

It localises to the cytoplasm. Functionally, exhibits a very high intrinsic GTPase hydrolysis rate. Involved in the addition of a carboxymethylaminomethyl (cmnm) group at the wobble position (U34) of certain tRNAs, forming tRNA-cmnm(5)s(2)U34. This chain is tRNA modification GTPase MnmE, found in Streptococcus pyogenes serotype M18 (strain MGAS8232).